A 168-amino-acid polypeptide reads, in one-letter code: ATP synthase subunit b (168 aa).

Residues 9–29 (SIPFGTIAYTLFIFLLLLVML) traverse the membrane as a helical segment.

It belongs to the ATPase B chain family. In terms of assembly, F-type ATPases have 2 components, F(1) - the catalytic core - and F(0) - the membrane proton channel. F(1) has five subunits: alpha(3), beta(3), gamma(1), delta(1), epsilon(1). F(0) has three main subunits: a(1), b(2) and c(10-14). The alpha and beta chains form an alternating ring which encloses part of the gamma chain. F(1) is attached to F(0) by a central stalk formed by the gamma and epsilon chains, while a peripheral stalk is formed by the delta and b chains.

Its subcellular location is the cell membrane. Its function is as follows. F(1)F(0) ATP synthase produces ATP from ADP in the presence of a proton or sodium gradient. F-type ATPases consist of two structural domains, F(1) containing the extramembraneous catalytic core and F(0) containing the membrane proton channel, linked together by a central stalk and a peripheral stalk. During catalysis, ATP synthesis in the catalytic domain of F(1) is coupled via a rotary mechanism of the central stalk subunits to proton translocation. Functionally, component of the F(0) channel, it forms part of the peripheral stalk, linking F(1) to F(0). The protein is ATP synthase subunit b of Bacillus cereus (strain B4264).